The primary structure comprises 310 residues: HPr kinase/phosphorylase (310 aa).

Active-site residues include His138 and Lys159. 153–160 provides a ligand contact to ATP; that stretch reads GDSGIGKS. Ser160 serves as a coordination point for Mg(2+). Residue Asp177 is the Proton acceptor; for phosphorylation activity. Proton donor; for dephosphorylation activity of the active site. Positions 201–210 are important for the catalytic mechanism of both phosphorylation and dephosphorylation; the sequence is LEIRGVGIID. Mg(2+) is bound at residue Glu202. Arg243 is an active-site residue. The important for the catalytic mechanism of dephosphorylation stretch occupies residues 264-269; the sequence is PVKTGR.

This sequence belongs to the HPrK/P family. Homohexamer. The cofactor is Mg(2+).

It carries out the reaction [HPr protein]-L-serine + ATP = [HPr protein]-O-phospho-L-serine + ADP + H(+). The catalysed reaction is [HPr protein]-O-phospho-L-serine + phosphate + H(+) = [HPr protein]-L-serine + diphosphate. Its function is as follows. Catalyzes the ATP- as well as the pyrophosphate-dependent phosphorylation of a specific serine residue in HPr, a phosphocarrier protein of the phosphoenolpyruvate-dependent sugar phosphotransferase system (PTS). HprK/P also catalyzes the pyrophosphate-producing, inorganic phosphate-dependent dephosphorylation (phosphorolysis) of seryl-phosphorylated HPr (P-Ser-HPr). The two antagonistic activities of HprK/P are regulated by several intracellular metabolites, which change their concentration in response to the absence or presence of rapidly metabolisable carbon sources (glucose, fructose, etc.) in the growth medium. Therefore, by controlling the phosphorylation state of HPr, HPrK/P is a sensor enzyme that plays a major role in the regulation of carbon metabolism and sugar transport: it mediates carbon catabolite repression (CCR), and regulates PTS-catalyzed carbohydrate uptake and inducer exclusion. This Streptococcus uberis (strain ATCC BAA-854 / 0140J) protein is HPr kinase/phosphorylase.